Consider the following 640-residue polypeptide: Threonine--tRNA ligase (640 aa).

The region spanning 1–61 (MPIITLPDGS…TNDAEIQIIT (61 aa)) is the TGS domain. Residues 242–533 (DHRKLGKKLS…LIENYSGNLP (292 aa)) form a catalytic region. Zn(2+)-binding residues include Cys-333, His-384, and His-510.

The protein belongs to the class-II aminoacyl-tRNA synthetase family. Homodimer. Zn(2+) is required as a cofactor.

The protein resides in the cytoplasm. The enzyme catalyses tRNA(Thr) + L-threonine + ATP = L-threonyl-tRNA(Thr) + AMP + diphosphate + H(+). Its function is as follows. Catalyzes the attachment of threonine to tRNA(Thr) in a two-step reaction: L-threonine is first activated by ATP to form Thr-AMP and then transferred to the acceptor end of tRNA(Thr). Also edits incorrectly charged L-seryl-tRNA(Thr). The polypeptide is Threonine--tRNA ligase (Prochlorococcus marinus (strain NATL1A)).